Reading from the N-terminus, the 228-residue chain is Upstream activation factor subunit UAF30 (228 aa).

Residues 1-56 form the DEK-C domain; sequence MAELNDYSTMIDILLSDMDLETVTTKKVRMALKEVYAIDVESQGKAINKLIRKHLD. The span at 89–111 shows a compositional bias: basic and acidic residues; it reads SKRSSGEEKNDSETKGTHVEKKK. Positions 89 to 118 are disordered; that stretch reads SKRSSGEEKNDSETKGTHVEKKKGTVSKSP. The SWIB/MDM2 domain maps to 119 to 195; the sequence is ISTRKVTLSK…HKILASHMTE (77 aa). The disordered stretch occupies residues 209-228; that stretch reads VRRKEKPIVSDSEQSDTKGI. Phosphoserine is present on residues S218, S220, and S223.

Component of the UAF (upstream activation factor) complex which consists of UAF30, RRN5, RRN9, RRN10, and histones H3 and H4.

It is found in the nucleus. The protein resides in the nucleolus. Nonessential component of the UAF (upstream activation factor) complex which interacts with the upstream element of the RNA polymerase I promoter and forms a stable preinitiation complex. Together with SPT15/TBP UAF seems to stimulate basal transcription to a fully activated level. UAF30 seems to play a role in silencing transcription by RNA polymerase II. The protein is Upstream activation factor subunit UAF30 (UAF30) of Saccharomyces cerevisiae (strain ATCC 204508 / S288c) (Baker's yeast).